The chain runs to 161 residues: ATP synthase subunit b (161 aa).

The chain crosses the membrane as a helical span at residues 10–29 (SVIQLMSFFLLLYILKKFLY).

Belongs to the ATPase B chain family. As to quaternary structure, F-type ATPases have 2 components, F(1) - the catalytic core - and F(0) - the membrane proton channel. F(1) has five subunits: alpha(3), beta(3), gamma(1), delta(1), epsilon(1). F(0) has three main subunits: a(1), b(2) and c(10-14). The alpha and beta chains form an alternating ring which encloses part of the gamma chain. F(1) is attached to F(0) by a central stalk formed by the gamma and epsilon chains, while a peripheral stalk is formed by the delta and b chains.

The protein localises to the cell inner membrane. In terms of biological role, f(1)F(0) ATP synthase produces ATP from ADP in the presence of a proton or sodium gradient. F-type ATPases consist of two structural domains, F(1) containing the extramembraneous catalytic core and F(0) containing the membrane proton channel, linked together by a central stalk and a peripheral stalk. During catalysis, ATP synthesis in the catalytic domain of F(1) is coupled via a rotary mechanism of the central stalk subunits to proton translocation. Component of the F(0) channel, it forms part of the peripheral stalk, linking F(1) to F(0). This chain is ATP synthase subunit b, found in Thermosipho melanesiensis (strain DSM 12029 / CIP 104789 / BI429).